The sequence spans 109 residues: Large ribosomal subunit protein uL24 (109 aa).

Belongs to the universal ribosomal protein uL24 family. In terms of assembly, part of the 50S ribosomal subunit.

In terms of biological role, one of two assembly initiator proteins, it binds directly to the 5'-end of the 23S rRNA, where it nucleates assembly of the 50S subunit. Functionally, one of the proteins that surrounds the polypeptide exit tunnel on the outside of the subunit. The sequence is that of Large ribosomal subunit protein uL24 from Rickettsia akari (strain Hartford).